A 174-amino-acid chain; its full sequence is ATP-dependent protease subunit HslV (174 aa).

T2 is an active-site residue. Na(+) is bound by residues G157, C160, and T163.

This sequence belongs to the peptidase T1B family. HslV subfamily. A double ring-shaped homohexamer of HslV is capped on each side by a ring-shaped HslU homohexamer. The assembly of the HslU/HslV complex is dependent on binding of ATP.

Its subcellular location is the cytoplasm. It carries out the reaction ATP-dependent cleavage of peptide bonds with broad specificity.. Allosterically activated by HslU binding. Protease subunit of a proteasome-like degradation complex believed to be a general protein degrading machinery. This is ATP-dependent protease subunit HslV from Shewanella piezotolerans (strain WP3 / JCM 13877).